A 941-amino-acid chain; its full sequence is UvrABC system protein A (941 aa).

Residue 31–38 (GLSGSGKS) coordinates ATP. Residues 253–280 (CPICGYSMRELEPRLFSFNNPAGACPTC) form a C4-type zinc finger. ABC transporter domains lie at 310–587 (WDRR…PESL) and 607–937 (ANPE…RFLK). 640–647 (GVSGSGKS) contacts ATP. Residues 740 to 766 (CEACQGDGVIKVEMHFLPDIYVPCDQC) form a C4-type zinc finger.

The protein belongs to the ABC transporter superfamily. UvrA family. In terms of assembly, forms a heterotetramer with UvrB during the search for lesions.

It is found in the cytoplasm. In terms of biological role, the UvrABC repair system catalyzes the recognition and processing of DNA lesions. UvrA is an ATPase and a DNA-binding protein. A damage recognition complex composed of 2 UvrA and 2 UvrB subunits scans DNA for abnormalities. When the presence of a lesion has been verified by UvrB, the UvrA molecules dissociate. The polypeptide is UvrABC system protein A (Salmonella typhi).